Consider the following 1322-residue polypeptide: Ice nucleation protein InaA (1322 aa).

Positions 162–1281 (ATYGSTLSGT…LTAGENSVLI (1120 aa)) are octapeptide periodicity. Polar residues-rich tracts occupy residues 271–302 (SLTAGYGSTQTAGEDSSLTAGYGSTQTAQKGS), 327–350 (TQTAGEESTQTAGYGSTQTAQKGS), 373–398 (GSTQTAGEDSSLTAGYGSTQTAQKGS), and 423–446 (TQTAGEESTQTAGYGSTQTAQKGS). Disordered regions lie at residues 271–303 (SLTAGYGSTQTAGEDSSLTAGYGSTQTAQKGSD), 327–358 (TQTAGEESTQTAGYGSTQTAQKGSDLTAGYGS), 372–399 (YGSTQTAGEDSSLTAGYGSTQTAQKGSD), and 423–448 (TQTAGEESTQTAGYGSTQTAQKGSDL).

The protein belongs to the bacterial ice nucleation protein family.

It localises to the cell outer membrane. Its function is as follows. Ice nucleation proteins enable bacteria to nucleate crystallization in supercooled water. In Pantoea ananas (Erwinia uredovora), this protein is Ice nucleation protein InaA (inaA).